A 367-amino-acid polypeptide reads, in one-letter code: Voltage-gated potassium channel subunit beta-2 (367 aa).

NADP(+) is bound by residues T56, W57, Q63, and D85. Y90 serves as the catalytic Proton donor/acceptor. 18 residues coordinate NADP(+): N158, S188, R189, Q214, W243, S244, P245, L246, A247, C248, K254, Y262, R264, G323, S325, Q329, E332, and N333.

It belongs to the shaker potassium channel beta subunit family. Forms heteromultimeric complex with alpha subunits.

The protein resides in the cytoplasm. Its subcellular location is the membrane. It localises to the cell membrane. It is found in the cell projection. The protein localises to the axon. The protein resides in the synapse. Its subcellular location is the synaptosome. It localises to the cytoskeleton. Functionally, regulatory subunit of the voltage-gated potassium (Kv) Shaker channels composed of pore-forming and potassium-conducting alpha subunits and of regulatory beta subunits. The beta-2/KCNAB2 cytoplasmic subunit may promote potassium channel closure via a mechanism that does not involve physical obstruction of the channel pore. Enhances current amplitude of Kv1.1/KCNA1 and Kv2.2/KCNA2 channels. May display nicotinamide adenine dinucleotide phosphate (NADPH)-dependent aldoketoreductase activity by catalyzing the NADPH-dependent reduction of a wide range of aldehyde and ketone substrates. The binding of oxidized and reduced nucleotide may alter Kv channel gating and contribute to dynamic fine tuning of cell excitability. This chain is Voltage-gated potassium channel subunit beta-2 (kcnab2), found in Xenopus laevis (African clawed frog).